The sequence spans 126 residues: Large ribosomal subunit protein bL12 (126 aa).

Belongs to the bacterial ribosomal protein bL12 family. In terms of assembly, homodimer. Part of the ribosomal stalk of the 50S ribosomal subunit. Forms a multimeric L10(L12)X complex, where L10 forms an elongated spine to which 2 to 4 L12 dimers bind in a sequential fashion. Binds GTP-bound translation factors.

In terms of biological role, forms part of the ribosomal stalk which helps the ribosome interact with GTP-bound translation factors. Is thus essential for accurate translation. The polypeptide is Large ribosomal subunit protein bL12 (Desulforudis audaxviator (strain MP104C)).